Here is a 128-residue protein sequence, read N- to C-terminus: Small ribosomal subunit protein uS11 (128 aa).

It belongs to the universal ribosomal protein uS11 family. Part of the 30S ribosomal subunit. Interacts with proteins S7 and S18. Binds to IF-3.

Functionally, located on the platform of the 30S subunit, it bridges several disparate RNA helices of the 16S rRNA. Forms part of the Shine-Dalgarno cleft in the 70S ribosome. In Leuconostoc mesenteroides subsp. mesenteroides (strain ATCC 8293 / DSM 20343 / BCRC 11652 / CCM 1803 / JCM 6124 / NCDO 523 / NBRC 100496 / NCIMB 8023 / NCTC 12954 / NRRL B-1118 / 37Y), this protein is Small ribosomal subunit protein uS11.